Reading from the N-terminus, the 531-residue chain is Non-muscle caldesmon (531 aa).

The interval 20-200 (AYQRNDDDEE…LKGGNLGENQ (181 aa)) is myosin and calmodulin-binding. Residues 21-379 (YQRNDDDEEE…KKPFKCFTPK (359 aa)) form a disordered region. The segment covering 41 to 50 (QERLRQKQEE) has biased composition (basic and acidic residues). The segment covering 54–68 (GQVTDQVEAHVQNSA) has biased composition (polar residues). Residues 93–116 (RLARREERRQKRLQEALERQKEFD) are compositionally biased toward basic and acidic residues. Positions 120-133 (TDGSLSVPSRRMQN) are enriched in polar residues. Ser-123 carries the post-translational modification Phosphoserine. Basic and acidic residues predominate over residues 143-156 (GEEKGESRSGRYEM). A compositionally biased stretch (polar residues) spans 162-172 (VITSYQKNSYQ). Positions 200–227 (QIKDEKIKKDKEPKEEVKNFLDRKKGFT) are enriched in basic and acidic residues. A Phosphoserine; by CDK1 modification is found at Ser-249. Basic and acidic residues-rich tracts occupy residues 271–297 (AGKR…KQKQ) and 305–372 (EELK…DKKP). The tropomyosin-binding stretch occupies residues 303-360 (ELEELKKKREERRKVLEEEEQRRKQEEADRKAREEEEKRRLKEEIERRRAEAAEKRQK). Ser-382 bears the Phosphoserine mark. Lys-384 participates in a covalent cross-link: Glycyl lysine isopeptide (Lys-Gly) (interchain with G-Cter in SUMO2). The tract at residues 392 to 424 (LNKSVQKSGVKSTHQAAVVSKIDSRLEQYTNAI) is strong actin-binding. Ser-395 is subject to Phosphoserine. A tropomyosin-binding region spans residues 402 to 412 (KSTHQAAVVSK). The calmodulin-binding stretch occupies residues 454-460 (WEKGSVF). Residues 458–531 (SVFSSPSASG…VDKVTSPTKV (74 aa)) are disordered. The segment covering 459–471 (VFSSPSASGTPNK) has biased composition (polar residues). Residue Ser-462 is modified to Phosphoserine; by CDK1. A Phosphothreonine; by CDK1 modification is found at Thr-468. Phosphoserine; by CDK1 is present on residues Ser-491 and Ser-497. A compositionally biased stretch (basic and acidic residues) spans 503-522 (SDLRPGDVSGKRNLWEKQSV). A weak actin-binding region spans residues 506-531 (RPGDVSGKRNLWEKQSVDKVTSPTKV). Ser-527 is subject to Phosphoserine; by CDK1.

This sequence belongs to the caldesmon family. In terms of processing, in non-muscle cells, phosphorylation by CDK1 during mitosis causes caldesmon to dissociate from microfilaments. Phosphorylation reduces caldesmon binding to actin, myosin, and calmodulin as well as its inhibition of actomyosin ATPase activity. Phosphorylation also occurs in both quiescent and dividing smooth muscle cells with similar effects on the interaction with actin and calmodulin and on microfilaments reorganization. CDK1-mediated phosphorylation promotes Schwann cell migration during peripheral nerve regeneration. As to expression, high-molecular-weight caldesmon (h-caldesmon) is predominantly expressed in smooth muscles, whereas low-molecular-weight caldesmon (l-caldesmon) is widely distributed in non-muscle tissues and cells. Not expressed in skeletal muscle or heart.

It is found in the cytoplasm. It localises to the cytoskeleton. The protein resides in the myofibril. Its subcellular location is the stress fiber. In terms of biological role, actin- and myosin-binding protein implicated in the regulation of actomyosin interactions in smooth muscle and nonmuscle cells (could act as a bridge between myosin and actin filaments). Stimulates actin binding of tropomyosin which increases the stabilization of actin filament structure. In muscle tissues, inhibits the actomyosin ATPase by binding to F-actin. This inhibition is attenuated by calcium-calmodulin and is potentiated by tropomyosin. Interacts with actin, myosin, two molecules of tropomyosin and with calmodulin. Also plays an essential role during cellular mitosis and receptor capping. Involved in Schwann cell migration during peripheral nerve regeneration. The protein is Non-muscle caldesmon (Cald1) of Rattus norvegicus (Rat).